Here is a 671-residue protein sequence, read N- to C-terminus: DNA ligase (671 aa).

Residues 32–36 (DAEYD), 81–82 (SL), and Glu113 contribute to the NAD(+) site. Lys115 acts as the N6-AMP-lysine intermediate in catalysis. Residues Arg136, Glu173, Lys290, and Lys314 each coordinate NAD(+). Zn(2+) is bound by residues Cys408, Cys411, Cys426, and Cys432. The region spanning 593-671 (EIDSPFAGKT…EAEMLRLLGS (79 aa)) is the BRCT domain.

This sequence belongs to the NAD-dependent DNA ligase family. LigA subfamily. It depends on Mg(2+) as a cofactor. Mn(2+) serves as cofactor.

It catalyses the reaction NAD(+) + (deoxyribonucleotide)n-3'-hydroxyl + 5'-phospho-(deoxyribonucleotide)m = (deoxyribonucleotide)n+m + AMP + beta-nicotinamide D-nucleotide.. In terms of biological role, DNA ligase that catalyzes the formation of phosphodiester linkages between 5'-phosphoryl and 3'-hydroxyl groups in double-stranded DNA using NAD as a coenzyme and as the energy source for the reaction. It is essential for DNA replication and repair of damaged DNA. In Shigella dysenteriae serotype 1 (strain Sd197), this protein is DNA ligase.